We begin with the raw amino-acid sequence, 270 residues long: Phosphatidylglycerol--prolipoprotein diacylglyceryl transferase (270 aa).

The next 7 helical transmembrane spans lie at 10–30 (VAVAIGPLQIHWYGLMYLVGI), 56–76 (LIFWLAMGVIVGGRLGYVLFY), 92–112 (WKGGMAFHGGFVGVMIAAWWF), 120–140 (FFQLMDFVAPLVPIGLGAGRI), 175–195 (SQLYQFALEGVALFIILNLYA), 202–222 (MAVSGMFALFYGIFRFVVEFV), and 237–257 (VTMGQILSLPMIIAGLFLIWL). Arginine 139 contributes to the a 1,2-diacyl-sn-glycero-3-phospho-(1'-sn-glycerol) binding site.

The protein belongs to the Lgt family.

It is found in the cell inner membrane. The catalysed reaction is L-cysteinyl-[prolipoprotein] + a 1,2-diacyl-sn-glycero-3-phospho-(1'-sn-glycerol) = an S-1,2-diacyl-sn-glyceryl-L-cysteinyl-[prolipoprotein] + sn-glycerol 1-phosphate + H(+). The protein operates within protein modification; lipoprotein biosynthesis (diacylglyceryl transfer). Its function is as follows. Catalyzes the transfer of the diacylglyceryl group from phosphatidylglycerol to the sulfhydryl group of the N-terminal cysteine of a prolipoprotein, the first step in the formation of mature lipoproteins. This Pseudomonas syringae pv. tomato (strain ATCC BAA-871 / DC3000) protein is Phosphatidylglycerol--prolipoprotein diacylglyceryl transferase.